The sequence spans 89 residues: MEANMQENIREGEDKRKGRSFYRKKVCRFCAQKVKIDYKEPDALRRFITERGKILPRRITGTCAKHQRKLAVEIKRARAVALLPFVMNE.

Belongs to the bacterial ribosomal protein bS18 family. As to quaternary structure, part of the 30S ribosomal subunit. Forms a tight heterodimer with protein bS6.

Its function is as follows. Binds as a heterodimer with protein bS6 to the central domain of the 16S rRNA, where it helps stabilize the platform of the 30S subunit. The protein is Small ribosomal subunit protein bS18 of Treponema denticola (strain ATCC 35405 / DSM 14222 / CIP 103919 / JCM 8153 / KCTC 15104).